The following is a 51-amino-acid chain: Insulin (51 aa).

Disulfide bonds link cysteine 8/cysteine 37, cysteine 20/cysteine 50, and cysteine 36/cysteine 41.

Belongs to the insulin family. In terms of assembly, heterodimer of a B chain and an A chain linked by two disulfide bonds.

The protein resides in the secreted. In terms of biological role, insulin decreases blood glucose concentration. It increases cell permeability to monosaccharides, amino acids and fatty acids. It accelerates glycolysis, the pentose phosphate cycle, and glycogen synthesis in liver. This is Insulin from Seriola quinqueradiata (Five-ray yellowtail).